Consider the following 421-residue polypeptide: UDP-N-acetylglucosamine 1-carboxyvinyltransferase (421 aa).

22-23 (KN) lines the phosphoenolpyruvate pocket. A UDP-N-acetyl-alpha-D-glucosamine-binding site is contributed by Arg93. Cys117 functions as the Proton donor in the catalytic mechanism. Cys117 is modified (2-(S-cysteinyl)pyruvic acid O-phosphothioketal). UDP-N-acetyl-alpha-D-glucosamine-binding positions include 122–126 (RPVDL), Asp308, and Ile330.

Belongs to the EPSP synthase family. MurA subfamily.

Its subcellular location is the cytoplasm. It carries out the reaction phosphoenolpyruvate + UDP-N-acetyl-alpha-D-glucosamine = UDP-N-acetyl-3-O-(1-carboxyvinyl)-alpha-D-glucosamine + phosphate. It functions in the pathway cell wall biogenesis; peptidoglycan biosynthesis. In terms of biological role, cell wall formation. Adds enolpyruvyl to UDP-N-acetylglucosamine. The chain is UDP-N-acetylglucosamine 1-carboxyvinyltransferase from Pseudomonas fluorescens (strain SBW25).